Reading from the N-terminus, the 550-residue chain is 2-succinyl-5-enolpyruvyl-6-hydroxy-3-cyclohexene-1-carboxylate synthase (550 aa).

The protein belongs to the TPP enzyme family. MenD subfamily. As to quaternary structure, homodimer. Requires Mg(2+) as cofactor. It depends on Mn(2+) as a cofactor. Thiamine diphosphate is required as a cofactor.

It carries out the reaction isochorismate + 2-oxoglutarate + H(+) = 5-enolpyruvoyl-6-hydroxy-2-succinyl-cyclohex-3-ene-1-carboxylate + CO2. It participates in quinol/quinone metabolism; 1,4-dihydroxy-2-naphthoate biosynthesis; 1,4-dihydroxy-2-naphthoate from chorismate: step 2/7. The protein operates within quinol/quinone metabolism; menaquinone biosynthesis. Its function is as follows. Catalyzes the thiamine diphosphate-dependent decarboxylation of 2-oxoglutarate and the subsequent addition of the resulting succinic semialdehyde-thiamine pyrophosphate anion to isochorismate to yield 2-succinyl-5-enolpyruvyl-6-hydroxy-3-cyclohexene-1-carboxylate (SEPHCHC). The chain is 2-succinyl-5-enolpyruvyl-6-hydroxy-3-cyclohexene-1-carboxylate synthase from Flavobacterium psychrophilum (strain ATCC 49511 / DSM 21280 / CIP 103535 / JIP02/86).